The following is a 56-amino-acid chain: uncharacterized protein (56 aa).

Residues 6–26 (MLLIMLYMVLVVNDLILYNIL) traverse the membrane as a helical segment.

Its subcellular location is the membrane. This is an uncharacterized protein from Dictyostelium discoideum (Social amoeba).